A 500-amino-acid chain; its full sequence is Small ribosomal subunit protein uS3m (500 aa).

The protein belongs to the universal ribosomal protein uS3 family.

The protein resides in the mitochondrion. The chain is Small ribosomal subunit protein uS3m (RPS3) from Prototheca wickerhamii.